The following is a 208-amino-acid chain: MKIVEVKHPLVKHKLGLMREHDISTKRFRELASEVGSLLTYEATSDLATEKVTIEGWNGPVQVEQIKGKKITVVPILRAGLGMMEGVLEHVPSARISVVGIYRNEETLEPVPYFQKLVSNIDERMALVVDPMLATGGSMIATIDLLKNAGCNSIKVLVLVAAPEGIAALEKAHPDVELYTASIDQGLNEHGYIIPGLGDAGDKIFGTK.

5-phospho-alpha-D-ribose 1-diphosphate-binding positions include arginine 78, arginine 103, and 130–138 (DPMLATGGS). Residues isoleucine 193 and 198-200 (GDA) each bind uracil. Residue aspartate 199 participates in 5-phospho-alpha-D-ribose 1-diphosphate binding.

The protein belongs to the UPRTase family. It depends on Mg(2+) as a cofactor.

It carries out the reaction UMP + diphosphate = 5-phospho-alpha-D-ribose 1-diphosphate + uracil. The protein operates within pyrimidine metabolism; UMP biosynthesis via salvage pathway; UMP from uracil: step 1/1. With respect to regulation, allosterically activated by GTP. Its function is as follows. Catalyzes the conversion of uracil and 5-phospho-alpha-D-ribose 1-diphosphate (PRPP) to UMP and diphosphate. The chain is Uracil phosphoribosyltransferase from Enterobacter sp. (strain 638).